The sequence spans 355 residues: Syntaxin-5 (355 aa).

Over 1–333 (MIPRKRYGSK…KYFQSVTSNR (333 aa)) the chain is Cytoplasmic. Positions 28–37 (PATAGSSSSD) are enriched in polar residues. Residues 28-47 (PATAGSSSSDIAPLPPPVAL) form a disordered region. The IxM motif; signal for cargo packaging into COPII-coated vesicles motif lies at 245–247 (IDM). Residues 263 to 325 (DSYIQSRADT…EAAHSEILKY (63 aa)) form the t-SNARE coiled-coil homology domain. A coiled-coil region spans residues 287-318 (FQQLAHMVKEQEETIQRIDENVLGAQLDVEAA). A helical; Anchor for type IV membrane protein membrane pass occupies residues 334–354 (WLMVKIFLILIVFFIIFVVFL). Residue Ala-355 is a topological domain, vesicular.

It belongs to the syntaxin family. Part of a ternary complex containing STX5A, NSFL1C and VCP. Part of a unique SNARE complex composed of the Golgi SNAREs GOSR1, GOSR2 and YKT6. This complex also includes VTI1A. Component of a SNARE complex consisting of STX5, YKT6, GOSR1 and BET1L. Interacts with BET1L. Interacts with BET1. Interacts with COG4. Interacts with GM130/GOLGA2. Interacts (via IxM motif) with SEC24C and SEC24D; mediates STX5 packaging into COPII-coated vesicles. Interacts with VLDLR; this interaction mediates VLDLR translocation from the endoplasmic reticulum to the plasma membrane.

It localises to the endoplasmic reticulum-Golgi intermediate compartment membrane. Its subcellular location is the golgi apparatus membrane. Mediates endoplasmic reticulum to Golgi transport. Together with p115/USO1 and GM130/GOLGA2, involved in vesicle tethering and fusion at the cis-Golgi membrane to maintain the stacked and inter-connected structure of the Golgi apparatus. This is Syntaxin-5 (STX5) from Bos taurus (Bovine).